The chain runs to 246 residues: V-type proton ATPase subunit D (246 aa).

The protein belongs to the V-ATPase D subunit family. V-ATPase is a heteromultimeric enzyme made up of two complexes: the ATP-hydrolytic V1 complex and the proton translocation V0 complex. The V1 complex consists of three catalytic AB heterodimers that form a heterohexamer, three peripheral stalks each consisting of EG heterodimers, one central rotor including subunits D and F, and the regulatory subunits C and H. The proton translocation complex V0 consists of the proton transport subunit a, a ring of proteolipid subunits c9c'', rotary subunit d, subunits e and f, and the accessory subunits VhaAC45 and ATP6AP2.

Functionally, subunit of the V1 complex of vacuolar(H+)-ATPase (V-ATPase), a multisubunit enzyme composed of a peripheral complex (V1) that hydrolyzes ATP and a membrane integral complex (V0) that translocates protons. V-ATPase is responsible for acidifying and maintaining the pH of intracellular compartments and in some cell types, is targeted to the plasma membrane, where it is responsible for acidifying the extracellular environment. This Manduca sexta (Tobacco hawkmoth) protein is V-type proton ATPase subunit D.